Here is a 252-residue protein sequence, read N- to C-terminus: uncharacterized protein (252 aa).

Residues 106 to 140 (IQSLHARRDHLDNAVEQLKSQLSRLDSSVAILKSQ) adopt a coiled-coil conformation.

This is an uncharacterized protein from Caenorhabditis elegans.